The chain runs to 527 residues: T-complex protein 1 subunit beta (527 aa).

It belongs to the TCP-1 chaperonin family. In terms of assembly, heterooligomeric complex of about 850 to 900 kDa that forms two stacked rings, 12 to 16 nm in diameter.

The protein localises to the cytoplasm. Functionally, molecular chaperone; assists the folding of proteins upon ATP hydrolysis. Known to play a role, in vitro, in the folding of actin and tubulin. This chain is T-complex protein 1 subunit beta, found in Arabidopsis thaliana (Mouse-ear cress).